Here is a 149-residue protein sequence, read N- to C-terminus: Large ribosomal subunit protein uL22c (149 aa).

Belongs to the universal ribosomal protein uL22 family. Part of the 50S ribosomal subunit.

It is found in the plastid. The protein localises to the chloroplast. This protein binds specifically to 23S rRNA. Its function is as follows. The globular domain of the protein is located near the polypeptide exit tunnel on the outside of the subunit, while an extended beta-hairpin is found that lines the wall of the exit tunnel in the center of the 70S ribosome. The sequence is that of Large ribosomal subunit protein uL22c (rpl22) from Hordeum vulgare (Barley).